The following is a 147-amino-acid chain: Deoxyuridine 5'-triphosphate nucleotidohydrolase (147 aa).

Substrate is bound by residues 63 to 65 (RSG), N76, and 80 to 82 (TID).

It belongs to the dUTPase family. The cofactor is Mg(2+).

It carries out the reaction dUTP + H2O = dUMP + diphosphate + H(+). It participates in pyrimidine metabolism; dUMP biosynthesis; dUMP from dCTP (dUTP route): step 2/2. This enzyme is involved in nucleotide metabolism: it produces dUMP, the immediate precursor of thymidine nucleotides and it decreases the intracellular concentration of dUTP so that uracil cannot be incorporated into DNA. The polypeptide is Deoxyuridine 5'-triphosphate nucleotidohydrolase (Chlamydia felis (strain Fe/C-56) (Chlamydophila felis)).